Consider the following 779-residue polypeptide: Nucleus-vacuole junction protein 2 (779 aa).

The Cytoplasmic portion of the chain corresponds to 1-2; the sequence is MF. The chain crosses the membrane as a helical; Signal-anchor for type II membrane protein span at residues 3-23; that stretch reads FAFLITYLLGGVTFLPFILFI. Over 24-779 the chain is Lumenal; sequence YLLTRPTHKS…VRPVPPIPKL (756 aa). Residue Asn233 is glycosylated (N-linked (GlcNAc...) asparagine). Positions 238-429 constitute an SMP-LTD domain; the sequence is SSPDTDWLNA…MPNMNDLAFF (192 aa). The span at 454–465 shows a compositional bias: basic and acidic residues; it reads PAEKDAKAERKK. Disordered regions lie at residues 454–539 and 573–592; these read PAEK…NKSS and LKTKAHKPRSIGGDSSQTTL. Ser473 carries the post-translational modification Phosphoserine. A compositionally biased stretch (polar residues) spans 484-494; sequence RSSNSNDTAPS. N-linked (GlcNAc...) asparagine glycosylation is found at Asn489 and Asn536. 2 N-linked (GlcNAc...) asparagine glycosylation sites follow: Asn640 and Asn660. Residues 654-779 form a disordered region; the sequence is QNAIDFNVTN…VRPVPPIPKL (126 aa). Positions 660–674 are enriched in polar residues; the sequence is NVTNTHSPSRSISSE. Positions 675–691 are enriched in basic and acidic residues; it reads KSYKAAERGQQDKHNDV. The span at 733–750 shows a compositional bias: polar residues; that stretch reads GQPTLHPQGQLPIQNVEQ.

The protein resides in the endoplasmic reticulum membrane. The protein localises to the nucleus membrane. In terms of biological role, during endoplasmic reticulum (ER) stress or when cellular ceramide levels increase, induces contacts between the ER and medial-Golgi complex to facilitate non-vesicular transport of ceramides from the ER to the Golgi complex where they are converted to complex sphingolipids, preventing toxic ceramide accumulation. In Schizosaccharomyces pombe (strain 972 / ATCC 24843) (Fission yeast), this protein is Nucleus-vacuole junction protein 2 (nvj2).